A 449-amino-acid polypeptide reads, in one-letter code: Trigger factor (449 aa).

The PPIase FKBP-type domain occupies 172-257; the sequence is GDEVRFDFKG…IKEITNVKPQ (86 aa).

Belongs to the FKBP-type PPIase family. Tig subfamily.

It localises to the cytoplasm. It carries out the reaction [protein]-peptidylproline (omega=180) = [protein]-peptidylproline (omega=0). Involved in protein export. Acts as a chaperone by maintaining the newly synthesized protein in an open conformation. Functions as a peptidyl-prolyl cis-trans isomerase. In Ureaplasma parvum serovar 3 (strain ATCC 27815 / 27 / NCTC 11736), this protein is Trigger factor.